Consider the following 294-residue polypeptide: Large ribosomal subunit protein uL18A (294 aa).

A Phosphoserine modification is found at Ser-10. Tyr-12 carries the post-translational modification Phosphotyrosine. The residue at position 81 (Ser-81) is a Phosphoserine.

This sequence belongs to the universal ribosomal protein uL18 family. In terms of assembly, component of the large ribosomal subunit (LSU). Mature yeast ribosomes consist of a small (40S) and a large (60S) subunit. The 40S small subunit contains 1 molecule of ribosomal RNA (18S rRNA) and 33 different proteins (encoded by 57 genes). The large 60S subunit contains 3 rRNA molecules (25S, 5.8S and 5S rRNA) and 46 different proteins (encoded by 81 genes). Component of a hexameric 5S RNP precursor complex, composed of 5S RNA, rrs1, rpf2, rpl5a/rpl5b, rpl11a/rpl11b and syo1; this complex acts as a precursor for ribosome assembly. rpl5a/rpl5b/uL18 forms a heterotrimeric complex with syo1 and rpl11a/rpl11b/uL5. Interaction of this complex with KAP104 allows the nuclear import of the heterotrimer.

It is found in the cytoplasm. Its subcellular location is the nucleus. In terms of biological role, component of the ribosome, a large ribonucleoprotein complex responsible for the synthesis of proteins in the cell. The small ribosomal subunit (SSU) binds messenger RNAs (mRNAs) and translates the encoded message by selecting cognate aminoacyl-transfer RNA (tRNA) molecules. The large subunit (LSU) contains the ribosomal catalytic site termed the peptidyl transferase center (PTC), which catalyzes the formation of peptide bonds, thereby polymerizing the amino acids delivered by tRNAs into a polypeptide chain. The nascent polypeptides leave the ribosome through a tunnel in the LSU and interact with protein factors that function in enzymatic processing, targeting, and the membrane insertion of nascent chains at the exit of the ribosomal tunnel. This Schizosaccharomyces pombe (strain 972 / ATCC 24843) (Fission yeast) protein is Large ribosomal subunit protein uL18A (rpl501).